The following is a 184-amino-acid chain: Ribosome-recycling factor (184 aa).

Residues 141-161 (KKNDKAISEDDQRKGQDDVQK) form a disordered region.

Belongs to the RRF family.

The protein resides in the cytoplasm. Responsible for the release of ribosomes from messenger RNA at the termination of protein biosynthesis. May increase the efficiency of translation by recycling ribosomes from one round of translation to another. This is Ribosome-recycling factor from Solidesulfovibrio magneticus (strain ATCC 700980 / DSM 13731 / RS-1) (Desulfovibrio magneticus).